The sequence spans 168 residues: Ribosome maturation factor RimM (168 aa).

The region spanning 92–166 is the PRC barrel domain; sequence EDTFYKADLI…RITVDPIEGM (75 aa).

Belongs to the RimM family. As to quaternary structure, binds ribosomal protein uS19.

The protein localises to the cytoplasm. Functionally, an accessory protein needed during the final step in the assembly of 30S ribosomal subunit, possibly for assembly of the head region. Essential for efficient processing of 16S rRNA. May be needed both before and after RbfA during the maturation of 16S rRNA. It has affinity for free ribosomal 30S subunits but not for 70S ribosomes. The sequence is that of Ribosome maturation factor RimM from Alkaliphilus metalliredigens (strain QYMF).